The sequence spans 427 residues: Histidinol dehydrogenase (427 aa).

Residues Tyr-125, Gln-186, and Asn-209 each coordinate NAD(+). Residues Ser-234, Gln-256, and His-259 each coordinate substrate. Gln-256 and His-259 together coordinate Zn(2+). Active-site proton acceptor residues include Glu-325 and His-326. Substrate is bound by residues His-326, Asp-359, Glu-413, and His-419. Residue Asp-359 coordinates Zn(2+). His-419 is a Zn(2+) binding site.

Belongs to the histidinol dehydrogenase family. It depends on Zn(2+) as a cofactor.

It carries out the reaction L-histidinol + 2 NAD(+) + H2O = L-histidine + 2 NADH + 3 H(+). It functions in the pathway amino-acid biosynthesis; L-histidine biosynthesis; L-histidine from 5-phospho-alpha-D-ribose 1-diphosphate: step 9/9. In terms of biological role, catalyzes the sequential NAD-dependent oxidations of L-histidinol to L-histidinaldehyde and then to L-histidine. This Leptospira interrogans serogroup Icterohaemorrhagiae serovar Lai (strain 56601) protein is Histidinol dehydrogenase.